The sequence spans 450 residues: MKRRYFGTDGIRGQSNVFPMTPDLAMRVGIAAGTIFRRGNHRHRVVIGKDTRLSGYMLENAMVAGFTAAGLDAFILGPIPTPAVAMLTRSLRCDIGVMISASHNPYEDNGIKLFGPDGYKLSDDLEAEIEDLLEKDLNAQLAKSDDIGRAKRVDGVHDRYIEHAKRTLPRDVTLQGLRIAIDCANGAAYKVAPAVLWELGAEVVTIGNEPNGTNINLNCGSTSPVALQKKVDEVRADIGIALDGDADRVIIVDENGSIVDGDQLMAVIAESWAESQQLRGNGIVATVMSNLGLERFLDDRGMALARTRVGDRYVVEHMRQHNYNVGGEQSGHIVLSDYGTTGDGLVAALQILAAVKRTGRTVSEVCRRFEPVPQLLRNVRISGGKPLEDIQVQKAIADAEAELAKNGRLVIRPSGTEPLIRVMAEGDDRAQIERIVNELIGTISNVRTAA.

The active-site Phosphoserine intermediate is Ser-102. The Mg(2+) site is built by Ser-102, Asp-243, Asp-245, and Asp-247. A Phosphoserine modification is found at Ser-102.

The protein belongs to the phosphohexose mutase family. It depends on Mg(2+) as a cofactor. In terms of processing, activated by phosphorylation.

It carries out the reaction alpha-D-glucosamine 1-phosphate = D-glucosamine 6-phosphate. Its function is as follows. Catalyzes the conversion of glucosamine-6-phosphate to glucosamine-1-phosphate. This is Phosphoglucosamine mutase from Rhizobium leguminosarum bv. trifolii (strain WSM2304).